A 691-amino-acid chain; its full sequence is Histone-lysine N-methyltransferase Set8 (691 aa).

5 disordered regions span residues 1-22 (MIMVRRRARPAKETGGGSAAAA), 211-234 (RSGLRDSHSSSHSSSSSGGASATT), 345-381 (PAAGGGAGAAARRRKPATPHRILCPSPIKTLPRGDGG), 422-450 (SRRRLNQPKPQAPYQPQQPQPPPGTQPTN), and 484-516 (APAKPRAALTKGSKTKTGSKIQPGPLPLAATNG). The segment covering 220-232 (SSHSSSSSGGASA) has biased composition (low complexity). Over residues 431–446 (PQAPYQPQQPQPPPGT) the composition is skewed to pro residues. Positions 484–503 (APAKPRAALTKGSKTKTGSK) are enriched in low complexity. One can recognise an SET domain in the interval 555 to 676 (EGLQVRNFMG…PGEELTYDYG (122 aa)). Residues 565-567 (KGR), Tyr-610, and 637-638 (NH) contribute to the S-adenosyl-L-methionine site.

This sequence belongs to the class V-like SAM-binding methyltransferase superfamily. Histone-lysine methyltransferase family. PR/SET subfamily.

Its subcellular location is the nucleus. It is found in the chromosome. The catalysed reaction is L-lysyl(20)-[histone H4] + S-adenosyl-L-methionine = N(6)-methyl-L-lysyl(20)-[histone H4] + S-adenosyl-L-homocysteine + H(+). Functionally, histone methyltransferase that specifically monomethylates 'Lys-20' of histone H4. H4 'Lys-20' monomethylation is enriched during mitosis and represents a specific tag for epigenetic transcriptional repression. Mainly functions in euchromatin regions, thereby playing a central role in the silencing of euchromatic genes. Required for cell proliferation, possibly by contributing to the maintenance of proper higher-order structure of DNA and chromosome condensation during mitosis. In Drosophila pseudoobscura pseudoobscura (Fruit fly), this protein is Histone-lysine N-methyltransferase Set8.